The primary structure comprises 204 residues: N-(5'-phosphoribosyl)anthranilate isomerase (204 aa).

This sequence belongs to the TrpF family.

It carries out the reaction N-(5-phospho-beta-D-ribosyl)anthranilate = 1-(2-carboxyphenylamino)-1-deoxy-D-ribulose 5-phosphate. It participates in amino-acid biosynthesis; L-tryptophan biosynthesis; L-tryptophan from chorismate: step 3/5. In Bacillus cereus (strain AH187), this protein is N-(5'-phosphoribosyl)anthranilate isomerase.